A 96-amino-acid chain; its full sequence is Integration host factor subunit beta (96 aa).

The protein belongs to the bacterial histone-like protein family. Heterodimer of an alpha and a beta chain.

Its function is as follows. This protein is one of the two subunits of integration host factor, a specific DNA-binding protein that functions in genetic recombination as well as in transcriptional and translational control. The polypeptide is Integration host factor subunit beta (Methylocella silvestris (strain DSM 15510 / CIP 108128 / LMG 27833 / NCIMB 13906 / BL2)).